Here is a 187-residue protein sequence, read N- to C-terminus: MASCLPNASPFLVMLAMCLLISTSEAEKYVVGGSEKSWKFPLSKPDSLSHWANSHRFKIGDTLIFKYEKRTESVHEGNETDYEGCNTVGKYHIVFNGGNTKVMLTKPGFRHFISGNQSHCQMGLKLAVLVISSNKTKKNLLSPSPSPSPPPSSLLSPSPSPLPNNQGVTSSSGAGFIGVMMWLMLLL.

The signal sequence occupies residues 1–26; that stretch reads MASCLPNASPFLVMLAMCLLISTSEA. The region spanning 27 to 132 is the Phytocyanin domain; it reads EKYVVGGSEK…GLKLAVLVIS (106 aa). N-linked (GlcNAc...) asparagine glycosylation is found at N78, N116, and N134. The cysteines at positions 85 and 120 are disulfide-linked. The interval 138 to 167 is disordered; sequence KNLLSPSPSPSPPPSSLLSPSPSPLPNNQG. Residues 144–162 show a composition bias toward pro residues; it reads SPSPSPPPSSLLSPSPSPL.

This sequence belongs to the early nodulin-like (ENODL) family.

It localises to the symbiosome. The protein localises to the peribacteroid membrane. May act as a carbohydrate transporter. In Glycine max (Soybean), this protein is Early nodulin-55-2.